Here is a 243-residue protein sequence, read N- to C-terminus: Myrosinase MB2 (243 aa).

Asn30 carries N-linked (GlcNAc...) asparagine glycosylation. Tyr51 provides a ligand contact to substrate. Glu125 (nucleophile) is an active-site residue. Residues Trp173 and 180-181 (EF) contribute to the substrate site. N-linked (GlcNAc...) asparagine glycosylation is present at Asn216.

It belongs to the glycosyl hydrolase 1 family. Homodimer. In terms of tissue distribution, in vacuoles called myrosin grains of a certain class of cells, myrosin cells, distributed in the cotyledons and the axis of the embryo as well as in different organs of the growing plant.

The protein resides in the vacuole. It carries out the reaction a thioglucoside + H2O = a sugar + a thiol.. Degradation of glucosinolates (glucose residue linked by a thioglucoside bound to an amino acid derivative) to glucose, sulfate and any of the products: thiocyanates, isothiocyanates, nitriles, epithionitriles or oxazolidine-2-thiones. The chain is Myrosinase MB2 from Sinapis alba (White mustard).